The primary structure comprises 137 residues: Small integral membrane protein 9 (137 aa).

Positions 1–23 (MKPLKLFCIGLLLCPLVCLLLET) are cleaved as a signal peptide. Residues 24-84 (APPPSALLTL…NHLSDFFKSS (61 aa)) are Extracellular-facing. Residues 85-105 (IPPAAIFALFVTTAIMRAAIV) form a helical membrane-spanning segment. Residues 106–137 (NKRLEEPHRQWTIDQRSSLEMQNMNLIKLFGG) lie on the Cytoplasmic side of the membrane.

The protein resides in the cell membrane. The chain is Small integral membrane protein 9 (Smim9) from Mus musculus (Mouse).